A 951-amino-acid polypeptide reads, in one-letter code: Zinc fingers and homeoboxes protein 3 (951 aa).

The disordered stretch occupies residues 1–66 (MASKRKSTTP…SSTDGSALAN (66 aa)). A required for nuclear localization region spans residues 1–107 (MASKRKSTTP…SEHTDFNKDP (107 aa)). The segment covering 42–58 (PSEAPDASSEAAPNPSS) has biased composition (low complexity). C2H2-type zinc fingers lie at residues 77-100 (YCCK…NSEH) and 109-132 (FVCT…AKCH). A disordered region spans residues 227–252 (TFINGAAPGSQASAKSTKPPPAANGP). Positions 238 to 483 (ASAKSTKPPP…LLTACPSITS (246 aa)) are required for homodimerization and interaction with NFYA. A required for repressor activity region spans residues 299–497 (LSSIPTYNAA…DANIYKNKKS (199 aa)). 2 DNA-binding regions (homeobox) span residues 300-359 (SSIP…GISW) and 489-548 (ANIY…RNLK). The interval 492–550 (YKNKKSHEQLSALKGSFCRNQFPGQSEVEHLTKVTGLSTREVRKWFSDRRYHCRNLKGS) is required for nuclear localization. At serine 599 the chain carries Phosphoserine. The homeobox 3 DNA-binding region spans 607–666 (TPTKYKERAPEQLRVLENSFAQNPLPPEEELDRLRSETKMTRREIDGWFSERRKKVNTEE). Over residues 662–676 (VNTEETKKADGHMPK) the composition is skewed to basic and acidic residues. The disordered stretch occupies residues 662 to 690 (VNTEETKKADGHMPKEEEEGAEQEGRDEE). Positions 677-690 (EEEEGAEQEGRDEE) are enriched in acidic residues. 2 positions are modified to phosphoserine: serine 703 and serine 718. 2 consecutive DNA-binding regions (homeobox) follow at residues 759-818 (PSKV…KNGQ) and 830-889 (FPPG…TRAV). The segment at 916–951 (SELSENSESWEPSAPEASSEPFDTSSPQSGRQLEAD) is disordered. Residues 919 to 936 (SENSESWEPSAPEASSEP) are compositionally biased toward low complexity. Phosphoserine is present on residues serine 922 and serine 941. Polar residues predominate over residues 937 to 951 (FDTSSPQSGRQLEAD).

It belongs to the ZHX family. Homodimer (via homeobox domain 1). Heterodimer with ZHX1 (via homeobox domain 1). Heterodimer with ZHX2 (via homeobox domain 1). Heterodimerization with ZHX1 is a prerequisite for repressor activity. Interacts with NFYA. As to expression, ubiquitously expressed.

The protein localises to the nucleus. In terms of biological role, acts as a transcriptional repressor. Involved in the early stages of mesenchymal stem cell (MSC) osteogenic differentiation. Is a regulator of podocyte gene expression during primary glomerula disease. Binds to promoter DNA. This is Zinc fingers and homeoboxes protein 3 (Zhx3) from Mus musculus (Mouse).